We begin with the raw amino-acid sequence, 337 residues long: Glutathione transferase 3 (337 aa).

At 1-239 (MPTKSTFSRW…NKYQYTLDFC (239 aa)) the chain is on the cytoplasmic side. A phosphoserine mark is found at S66, S72, S99, and S116. Residues 66–95 (SMTVDQSKDERNEYGSGSGNGSGSGSCDTA) are disordered. The disordered stretch occupies residues 107–132 (KEDDDEKPQSGDETSATKPLSSRNAN). A compositionally biased stretch (polar residues) spans 117–132 (GDETSATKPLSSRNAN). A helical membrane pass occupies residues 240–260 (LPILTWLLFFRGIPTLVSYYI). At 261–313 (NFIRYDLNIELDPMTFNLTKFLISLAIFKTCNNKNIDFHSFRCVNQLWTQLCT) the chain is on the perinuclear space side. The helical transmembrane segment at 314–336 (VNRSLGMVPLVFSMVSCLLTLYV) threads the bilayer. A topological domain (cytoplasmic) is located at residue L337.

Its subcellular location is the nucleus membrane. This is Glutathione transferase 3 (GTT3) from Saccharomyces cerevisiae (strain ATCC 204508 / S288c) (Baker's yeast).